We begin with the raw amino-acid sequence, 415 residues long: Glutamyl-tRNA reductase (415 aa).

Residues 49-52, Ser104, 109-111, and Gln115 contribute to the substrate site; these read TCNR and EPQ. Residue Cys50 is the Nucleophile of the active site. 184–189 is an NADP(+) binding site; that stretch reads GAGEMI.

Belongs to the glutamyl-tRNA reductase family. In terms of assembly, homodimer.

It catalyses the reaction (S)-4-amino-5-oxopentanoate + tRNA(Glu) + NADP(+) = L-glutamyl-tRNA(Glu) + NADPH + H(+). It participates in porphyrin-containing compound metabolism; protoporphyrin-IX biosynthesis; 5-aminolevulinate from L-glutamyl-tRNA(Glu): step 1/2. In terms of biological role, catalyzes the NADPH-dependent reduction of glutamyl-tRNA(Glu) to glutamate 1-semialdehyde (GSA). The sequence is that of Glutamyl-tRNA reductase from Neisseria gonorrhoeae (strain ATCC 700825 / FA 1090).